Reading from the N-terminus, the 386-residue chain is Glycerate dehydrogenase HPR, peroxisomal (386 aa).

NAD(+)-binding positions include arginine 175–isoleucine 176, cysteine 271–arginine 273, and aspartate 297. Residue arginine 273 is part of the active site. The active site involves glutamate 302. The Proton donor role is filled by histidine 320. Residue histidine 320–serine 323 participates in NAD(+) binding. Residues serine 384 to leucine 386 carry the Microbody targeting signal motif.

Belongs to the D-isomer specific 2-hydroxyacid dehydrogenase family. As to expression, present in leaves (at protein level). Mostly expressed in photosynthetic tissues such as leaves, stems, flowers, buds, and, to a lower extent, in siliques and roots.

The protein localises to the peroxisome. It carries out the reaction (R)-glycerate + NAD(+) = 3-hydroxypyruvate + NADH + H(+). It functions in the pathway photosynthesis; photorespiration; 3-phospho-D-glycerate from glycine: step 3/4. Its activity is regulated as follows. Slightly inhibited by oxalate. Its function is as follows. Catalyzes the NADH-dependent reduction of hydroxypyruvate into glycerate in the photorespiratory core cycle. Mediates fatty acid beta-oxidation in germinating seeds when malate dehydrogenase is absent. In Arabidopsis thaliana (Mouse-ear cress), this protein is Glycerate dehydrogenase HPR, peroxisomal (HPR).